Here is a 1035-residue protein sequence, read N- to C-terminus: Cell-division control histidine kinase PdhS (1035 aa).

The tract at residues 1-613 is important for polar localization; it reads MSGSYPFIDI…HADGSEEPVD (613 aa). The segment at 500–533 is disordered; that stretch reads QGLANTRAESETPVSETSSIEPVEPTPPVKTRSE. Positions 614 to 1035 are interaction with DivK; the sequence is AHLNAIAWRG…VFPPTRVLAD (422 aa). Positions 659 to 730 constitute a PAS domain; it reads HVEELKTILD…YLHGLSGNGV (72 aa). The Histidine kinase domain occupies 802–1031; that stretch reads RISHEIRTPL…VVEIVFPPTR (230 aa). The residue at position 805 (H805) is a Phosphohistidine; by autocatalysis.

Interacts with DivK.

It localises to the cytoplasm. It carries out the reaction ATP + protein L-histidine = ADP + protein N-phospho-L-histidine.. Its function is as follows. Functions as a polar differentiation marker. Essential protein that, by localizing in the old pole of dividing cells, controls cell division and maturation, probably through control of DivK phosphorylation status and cellular distribution, which in turn regulates CtrA, a transcriptional regulator of the minB operon. The asymmetrical localization of this protein is probably required for cells to enter a new division cycle. In Brucella melitensis biotype 1 (strain ATCC 23456 / CCUG 17765 / NCTC 10094 / 16M), this protein is Cell-division control histidine kinase PdhS (pdhS).